A 448-amino-acid chain; its full sequence is Tumor necrosis factor receptor superfamily member EDAR (448 aa).

Positions 1 to 26 are cleaved as a signal peptide; it reads MAHVGDCKWMSWLPVLVVSLMCSAKA. Topologically, residues 27–187 are extracellular; sequence EDSNCGENEY…LSGQGHLATA (161 aa). TNFR-Cys repeat units lie at residues 30–71, 73–113, and 115–150; these read NCGE…DYGC, PCPA…DAEC, and PCLP…ECVG. Intrachain disulfides connect C31-C44, C47-C60, C50-C71, C74-C87, C93-C113, and C135-C148. The N-linked (GlcNAc...) asparagine glycan is linked to N38. A helical transmembrane segment spans residues 188 to 208; that stretch reads LIIAMSTIFIMAIAIVLIIMF. Residues 209-448 lie on the Cytoplasmic side of the membrane; it reads YIMKTKPSAP…PPASPPPAAS (240 aa). The segment covering 220–229 has biased composition (low complexity); that stretch reads CCSSPPGKSA. The disordered stretch occupies residues 220–297; that stretch reads CCSSPPGKSA…EEPAPDKQGS (78 aa). The segment covering 258-283 has biased composition (polar residues); that stretch reads LTATPTKTPKSENDASSENEQLLSRS. The 74-residue stretch at 358–431 folds into the Death domain; the sequence is RMLSSTYNSE…DAVESLCADI (74 aa).

As to quaternary structure, binds to EDARADD. Associates with TRAF1, TRAF2, TRAF3 and NIK.

It is found in the membrane. In terms of biological role, receptor for EDA isoform TAA, but not for EDA isoform TA-2. May mediate the activation of NF-kappa-B and JNK. May promote caspase-independent cell death. This is Tumor necrosis factor receptor superfamily member EDAR (Edar) from Mus musculus (Mouse).